The chain runs to 298 residues: ADP/ATP translocase 1 (298 aa).

Residues 1 to 7 (MGDQALS) are Mitochondrial intermembrane-facing. Position 2 is an N-acetylglycine (Gly-2). The Solcar 1 repeat unit spans residues 6–98 (LSFLKDFLAG…FAFKDKYKQI (93 aa)). At Ser-7 the chain carries Phosphoserine. The helical transmembrane segment at 8–37 (FLKDFLAGGIAAAVSKTAVAPIERVKLLLQ) threads the bilayer. At 38–74 (VQHASKQISAEKQYKGIIDCVVRIPKEQGFLSFWRGN) the chain is on the mitochondrial matrix side. Position 52 is an N6,N6,N6-trimethyllysine (Lys-52). Residues 75–99 (LANVIRYFPTQALNFAFKDKYKQIF) traverse the membrane as a helical segment. ADP contacts are provided by Arg-80 and Lys-92. Topologically, residues 100 to 109 (LGGVDRHKQF) are mitochondrial intermembrane. Residues 110-130 (WRYFAGNLASGGAAGATSLCF) form a helical membrane-spanning segment. Solcar repeat units follow at residues 111–201 (RYFA…AKGM) and 212–297 (VSWM…IKKY). At 131 to 178 (VYPLDFARTRLAADVGKGSSQREFNGLGDCLTKIFKSDGLKGLYQGFS) the chain is on the mitochondrial matrix side. Lys-147 is subject to N6-succinyllysine. A phosphoserine mark is found at Ser-149 and Ser-150. An S-nitrosocysteine modification is found at Cys-160. The chain crosses the membrane as a helical span at residues 179–199 (VSVQGIIIYRAAYFGVYDTAK). Residues 200–210 (GMLPDPKNVHI) lie on the Mitochondrial intermembrane side of the membrane. The chain crosses the membrane as a helical span at residues 211 to 231 (IVSWMIAQSVTAVAGLVSYPF). The Mitochondrial matrix segment spans residues 232–273 (DTVRRRMMMQSGRKGADIMYTGTVDCWRKIAKDEGRKAFFKG). Arg-235 contributes to the ADP binding site. The important for transport activity stretch occupies residues 235 to 240 (RRRMMM). The Nucleotide carrier signature motif signature appears at 235–240 (RRRMMM). Residues Lys-245 and Lys-272 each carry the N6-succinyllysine modification. A helical membrane pass occupies residues 274-291 (AWSNVLRGMGGAFVLVLY). Residues 292-298 (DEIKKYV) lie on the Mitochondrial intermembrane side of the membrane.

It belongs to the mitochondrial carrier (TC 2.A.29) family. As to quaternary structure, monomer. Found in a complex with ARL2, ARL2BP and SLC25A4/ANT1. Interacts with ARL2BP. Interacts with TIMM44; leading to inhibit the presequence translocase TIMM23, thereby promoting stabilization of PINK1. Under cell death induction, transglutaminated by TGM2. Transglutamination leads to formation of covalent cross-links between a glutamine and the epsilon-amino group of a lysine residue, forming polymers.

It is found in the mitochondrion inner membrane. The protein localises to the membrane. It catalyses the reaction ADP(in) + ATP(out) = ADP(out) + ATP(in). The catalysed reaction is H(+)(in) = H(+)(out). The matrix-open state (m-state) is inhibited by the membrane-permeable bongkrekic acid (BKA). The cytoplasmic-open state (c-state) is inhibited by the membrane-impermeable toxic inhibitor carboxyatractyloside (CATR). Proton transporter activity is inhibited by ADP:ATP antiporter activity. Functionally, ADP:ATP antiporter that mediates import of ADP into the mitochondrial matrix for ATP synthesis, and export of ATP out to fuel the cell. Cycles between the cytoplasmic-open state (c-state) and the matrix-open state (m-state): operates by the alternating access mechanism with a single substrate-binding site intermittently exposed to either the cytosolic (c-state) or matrix (m-state) side of the inner mitochondrial membrane. In addition to its ADP:ATP antiporter activity, also involved in mitochondrial uncoupling and mitochondrial permeability transition pore (mPTP) activity. Plays a role in mitochondrial uncoupling by acting as a proton transporter: proton transport uncouples the proton flows via the electron transport chain and ATP synthase to reduce the efficiency of ATP production and cause mitochondrial thermogenesis. Proton transporter activity is inhibited by ADP:ATP antiporter activity, suggesting that SLC25A4/ANT1 acts as a master regulator of mitochondrial energy output by maintaining a delicate balance between ATP production (ADP:ATP antiporter activity) and thermogenesis (proton transporter activity). Proton transporter activity requires free fatty acids as cofactor, but does not transport it. Also plays a key role in mPTP opening, a non-specific pore that enables free passage of the mitochondrial membranes to solutes of up to 1.5 kDa, and which contributes to cell death. It is however unclear if SLC25A4/ANT1 constitutes a pore-forming component of mPTP or regulates it. Acts as a regulator of mitophagy independently of ADP:ATP antiporter activity: promotes mitophagy via interaction with TIMM44, leading to inhibit the presequence translocase TIMM23, thereby promoting stabilization of PINK1. In Rattus norvegicus (Rat), this protein is ADP/ATP translocase 1.